The following is a 161-amino-acid chain: Phosphopantetheine adenylyltransferase (161 aa).

Residue T10 participates in substrate binding. Residues 10–11 and H18 contribute to the ATP site; that span reads TF. Substrate contacts are provided by K42, M74, and R88. ATP contacts are provided by residues 89-91, E99, and 124-130; these read GVR and LSFVSSS.

The protein belongs to the bacterial CoaD family. Homohexamer. Mg(2+) serves as cofactor.

Its subcellular location is the cytoplasm. It carries out the reaction (R)-4'-phosphopantetheine + ATP + H(+) = 3'-dephospho-CoA + diphosphate. Its pathway is cofactor biosynthesis; coenzyme A biosynthesis; CoA from (R)-pantothenate: step 4/5. Its function is as follows. Reversibly transfers an adenylyl group from ATP to 4'-phosphopantetheine, yielding dephospho-CoA (dPCoA) and pyrophosphate. The protein is Phosphopantetheine adenylyltransferase of Proteus mirabilis (strain HI4320).